The primary structure comprises 129 residues: MSTQPSKDLETFPNPRPERDFVLHMRIPEFTCLCPKTGQPDFATIHLDYVPDERCVELKSLKLYMWSFRDQGAFHEAITNEILDDLVRATEPRYMKVTAEFYVRGGIYTTVVAEHRKPGWAPAPKVELA.

The Thioimide intermediate role is filled by C34. The Proton donor role is filled by D41. Substrate contacts are provided by residues 56-58 and 75-76; these read VEL and HE.

This sequence belongs to the GTP cyclohydrolase I family. QueF type 1 subfamily.

The protein localises to the cytoplasm. The enzyme catalyses 7-aminomethyl-7-carbaguanine + 2 NADP(+) = 7-cyano-7-deazaguanine + 2 NADPH + 3 H(+). The protein operates within tRNA modification; tRNA-queuosine biosynthesis. Catalyzes the NADPH-dependent reduction of 7-cyano-7-deazaguanine (preQ0) to 7-aminomethyl-7-deazaguanine (preQ1). In Alkalilimnicola ehrlichii (strain ATCC BAA-1101 / DSM 17681 / MLHE-1), this protein is NADPH-dependent 7-cyano-7-deazaguanine reductase.